The primary structure comprises 448 residues: DNA repair protein RadA (448 aa).

The C4-type zinc-finger motif lies at 10 to 27 (CQHCGFTSPKWLGKCVQC). Residue 96–103 (GSPGVGKS) participates in ATP binding. Residues 253–257 (KNRFG) carry the RadA KNRFG motif motif. Positions 351 to 448 (DVFINVSGGI…NVVGKIVEWM (98 aa)) are lon-protease-like.

The protein belongs to the RecA family. RadA subfamily.

Its function is as follows. DNA-dependent ATPase involved in processing of recombination intermediates, plays a role in repairing DNA breaks. Stimulates the branch migration of RecA-mediated strand transfer reactions, allowing the 3' invading strand to extend heteroduplex DNA faster. Binds ssDNA in the presence of ADP but not other nucleotides, has ATPase activity that is stimulated by ssDNA and various branched DNA structures, but inhibited by SSB. Does not have RecA's homology-searching function. The protein is DNA repair protein RadA of Helicobacter pylori (strain J99 / ATCC 700824) (Campylobacter pylori J99).